The sequence spans 111 residues: UPF0145 protein BRADO6695 (111 aa).

This sequence belongs to the UPF0145 family.

In Bradyrhizobium sp. (strain ORS 278), this protein is UPF0145 protein BRADO6695.